The sequence spans 559 residues: CCR4-NOT transcription complex subunit 6-like (559 aa).

The tract at residues Met-1–Lys-148 is required for interaction with cnot1, cnot3 and cnot7. A nuclease domain region spans residues Met-1–Thr-550. 4 LRR repeats span residues His-52–Leu-73, His-75–Met-96, Thr-98–Phe-120, and Gln-121–Pro-143. Position 235 (Glu-235) interacts with Mg(2+). Residues Glu-235, Glu-271, His-353, and Pro-358 each contribute to the substrate site. Mg(2+) is bound at residue Asp-405. Asp-405 serves as the catalytic Proton donor/acceptor. Substrate-binding residues include Asn-407, Asn-474, and Phe-479.

It belongs to the CCR4/nocturin family. As to quaternary structure, component of the CCR4-NOT complex. Mg(2+) is required as a cofactor.

The protein localises to the cytoplasm. It localises to the nucleus. It carries out the reaction Exonucleolytic cleavage of poly(A) to 5'-AMP.. Poly(A) nuclease with 3'-5' RNase activity. Catalytic component of the CCR4-NOT complex which is one of the major cellular mRNA deadenylases and is linked to various cellular processes including bulk mRNA degradation, miRNA-mediated repression, translational repression during translational initiation and general transcription regulation. Additional complex functions may be a consequence of its influence on mRNA expression. This is CCR4-NOT transcription complex subunit 6-like (cnot6l) from Danio rerio (Zebrafish).